A 183-amino-acid polypeptide reads, in one-letter code: Dual-action ribosomal maturation protein DarP (183 aa).

Belongs to the DarP family.

Its subcellular location is the cytoplasm. Its function is as follows. Member of a network of 50S ribosomal subunit biogenesis factors which assembles along the 30S-50S interface, preventing incorrect 23S rRNA structures from forming. Promotes peptidyl transferase center (PTC) maturation. The protein is Dual-action ribosomal maturation protein DarP of Shigella boydii serotype 18 (strain CDC 3083-94 / BS512).